The primary structure comprises 264 residues: Thymidylate synthase (264 aa).

Residue arginine 21 participates in dUMP binding. Residue histidine 51 participates in (6R)-5,10-methylene-5,6,7,8-tetrahydrofolate binding. 126–127 is a dUMP binding site; sequence RR. Residue cysteine 146 is the Nucleophile of the active site. DUMP is bound by residues 166–169, asparagine 177, and 207–209; these read RSCD and HLY. Aspartate 169 contributes to the (6R)-5,10-methylene-5,6,7,8-tetrahydrofolate binding site. Alanine 263 is a binding site for (6R)-5,10-methylene-5,6,7,8-tetrahydrofolate.

The protein belongs to the thymidylate synthase family. Bacterial-type ThyA subfamily. In terms of assembly, homodimer.

It is found in the cytoplasm. The enzyme catalyses dUMP + (6R)-5,10-methylene-5,6,7,8-tetrahydrofolate = 7,8-dihydrofolate + dTMP. It functions in the pathway pyrimidine metabolism; dTTP biosynthesis. In terms of biological role, catalyzes the reductive methylation of 2'-deoxyuridine-5'-monophosphate (dUMP) to 2'-deoxythymidine-5'-monophosphate (dTMP) while utilizing 5,10-methylenetetrahydrofolate (mTHF) as the methyl donor and reductant in the reaction, yielding dihydrofolate (DHF) as a by-product. This enzymatic reaction provides an intracellular de novo source of dTMP, an essential precursor for DNA biosynthesis. The protein is Thymidylate synthase of Escherichia coli (strain 55989 / EAEC).